The following is a 182-amino-acid chain: UPF0397 protein SAG1634 (182 aa).

The next 5 membrane-spanning stretches (helical) occupy residues 9–29, 42–62, 74–94, 109–129, and 148–168; these read VVAT…VNIP, AVLA…TGFI, SPWW…GFFA, LLLF…VVAP, and FLSS…LLLA.

It belongs to the UPF0397 family.

It is found in the cell membrane. The sequence is that of UPF0397 protein SAG1634 from Streptococcus agalactiae serotype V (strain ATCC BAA-611 / 2603 V/R).